The sequence spans 159 residues: Ribosomal RNA large subunit methyltransferase H (159 aa).

S-adenosyl-L-methionine-binding positions include Leu-76, Gly-108, and 127-132 (FSNMTF).

This sequence belongs to the RNA methyltransferase RlmH family. As to quaternary structure, homodimer.

It localises to the cytoplasm. It catalyses the reaction pseudouridine(1915) in 23S rRNA + S-adenosyl-L-methionine = N(3)-methylpseudouridine(1915) in 23S rRNA + S-adenosyl-L-homocysteine + H(+). Its function is as follows. Specifically methylates the pseudouridine at position 1915 (m3Psi1915) in 23S rRNA. The chain is Ribosomal RNA large subunit methyltransferase H from Staphylococcus epidermidis (strain ATCC 35984 / DSM 28319 / BCRC 17069 / CCUG 31568 / BM 3577 / RP62A).